The sequence spans 1523 residues: WD repeat-containing protein 62 (1523 aa).

Residue Ala2 is modified to N-acetylalanine. At Ser33 the chain carries Phosphoserine. Position 46 is a phosphothreonine (Thr46). WD repeat units follow at residues 109 to 150 (TTRK…QVAE), 153 to 194 (GHKY…VVAS), 196 to 234 (KVSC…EAKV), 291 to 330 (INLK…YLTN), 357 to 396 (AVYP…EVSK), 411 to 450 (EVYP…DTRW), 490 to 529 (DMKA…ELIK), 532 to 574 (AHDA…NLEQ), 578 to 618 (DHSS…DGLH), 626 to 665 (AEKT…QKKC), 671 to 713 (GDEG…KMFG), and 714 to 752 (HSEI…TTCM). Phosphoserine is present on Ser501. The disordered stretch occupies residues 762–824 (QEQQQQPKDQ…PSKDSLDPDP (63 aa)). Residues 776-790 (PPSQETYASTPSEIR) are compositionally biased toward polar residues. Residues 797–809 (QTEDEMEEECEPE) are compositionally biased toward acidic residues. The stretch at 803–846 (EEECEPEELLKTPSKDSLDPDPRCLLTNGKLPLWAKRLLGDDDV) is one WD 13 repeat. Basic and acidic residues predominate over residues 810 to 824 (ELLKTPSKDSLDPDP). Phosphoserine is present on residues Ser966 and Ser972. The interval 1000 to 1072 (VSSVSSKDQS…GLGNGSLPQT (73 aa)) is disordered. Thr1072 is subject to Phosphothreonine. Phosphoserine occurs at positions 1117, 1143, and 1169. Positions 1143–1258 (SPEAQPVGQG…SLHKPLSPGQ (116 aa)) are disordered. Polar residues-rich tracts occupy residues 1167–1177 (YMSSDGTNVLS) and 1199–1213 (TSVL…ISAP). Over residues 1214-1225 (SSCSYLESTTSS) the composition is skewed to low complexity. Positions 1226–1235 (HAKTTRSISL) are enriched in polar residues. Ser1234 is subject to Phosphoserine.

In terms of assembly, can form homodimers (via C-terminus). Interacts (via C-terminus) with MAPKBP1 (via C-terminus). Interacts with CDK5RAP2, CEP152, CEP63 and KIAA0753. CEP63, CDK5RAP2, CEP152, WDR62 are proposed to form a stepwise assembled complex at the centrosome forming a ring near parental centrioles. As to expression, prominent in neural crest lineages from 9.5 dpc to 11.5 dpc. Also expressed in the ventricular and subventricular zones during the period of cerebral cortical neurogenesis (11.5-16.5 dpc), with expression decreasing in intensity by 17.5 dpc. In the cerebellum, it is strongly expressed in precursors of granule neurons at late embryonic and early postnatal stages; by postnatal day 9 (P9). Present in fetal brain, enriched within the ventricular and subventricular zone (at protein level).

It localises to the nucleus. Its subcellular location is the cytoplasm. The protein resides in the cytoskeleton. It is found in the spindle pole. The protein localises to the microtubule organizing center. It localises to the centrosome. Its subcellular location is the centriole. Required for cerebral cortical development. Plays a role in neuronal proliferation and migration. Plays a role in mother-centriole-dependent centriole duplication; the function seems also to involve CEP152, CDK5RAP2 and CEP63 through a stepwise assembled complex at the centrosome that recruits CDK2 required for centriole duplication. This Mus musculus (Mouse) protein is WD repeat-containing protein 62 (Wdr62).